We begin with the raw amino-acid sequence, 164 residues long: Hydrogenase 2 maturation protease (164 aa).

Positions 16, 62, and 93 each coordinate Ni(2+).

This sequence belongs to the peptidase A31 family. Ni(2+) is required as a cofactor.

Its function is as follows. Protease involved in the C-terminal processing of HybC, the large subunit of hydrogenase 2. Specifically cleaves off a 15 amino acid peptide from the C-terminus of the precursor of HybC. The polypeptide is Hydrogenase 2 maturation protease (hybD) (Escherichia coli (strain K12)).